An 87-amino-acid polypeptide reads, in one-letter code: Small ribosomal subunit protein uS15c (87 aa).

This sequence belongs to the universal ribosomal protein uS15 family. Part of the 30S ribosomal subunit.

Its subcellular location is the plastid. It is found in the chloroplast. This is Small ribosomal subunit protein uS15c (rps15) from Illicium oligandrum (Star anise).